We begin with the raw amino-acid sequence, 612 residues long: MATAATIPSVATATAAALGEVEDEGLLASLFRDRFPEAQWRERPDVGRYLRELSGSGLERLRREPERLAEERAQLLQQTRDLAFANYKTFIRGAECTERIHRLFGDVEASLGRLLDRLPSFQQSCRNFVKEAEEISSNRRMNSLTLNRHTEILEILEIPQLMDTCVRNSYYEEALELAAYVRRLERKYSSIPVIQGIVNEVRQSMQLMLSQLIQQLRTNIQLPACLRVIGYLRRMDVFTEAELRVKFLQARDAWLRSILTAIPNDDPYFHITKTIEASRVHLFDIITQYRAIFSDEDPLLPPAMGEHTVNESAIFHGWVLQKVSQFLQVLETDLYRGIGGHLDSLLGQCMYFGLSFSRVGADFRGQLAPVFQRVAISTFQKAIQETVEKFQEEMNSYMLISAPAILGTSNMPAAVPATQPGTLQPPMVLLDFPPLACFLNNILVAFNDLRLCCPVALAQDVTGALEDALAKVTKIILAFHRAEEAAFSSGEQELFVQFCTVFLEDLVPYLNRCLQVLFPPAQIAQTLGIPPTQLSKYGNLGHVNIGAIQEPLAFILPKRETLFTLDDQALGPELTAPAPEPPAEEPRLEPAGPACPEGGRAETQAEPPSVGP.

The disordered stretch occupies residues 568-612; the sequence is QALGPELTAPAPEPPAEEPRLEPAGPACPEGGRAETQAEPPSVGP.

It belongs to the COG8 family. Component of the conserved oligomeric Golgi complex which is composed of eight different subunits and is required for normal Golgi morphology and localization.

It localises to the golgi apparatus membrane. Its function is as follows. Required for normal Golgi function. The protein is Conserved oligomeric Golgi complex subunit 8 (COG8) of Homo sapiens (Human).